A 226-amino-acid chain; its full sequence is Leucyl/phenylalanyl-tRNA--protein transferase (226 aa).

This sequence belongs to the L/F-transferase family.

The protein resides in the cytoplasm. The catalysed reaction is N-terminal L-lysyl-[protein] + L-leucyl-tRNA(Leu) = N-terminal L-leucyl-L-lysyl-[protein] + tRNA(Leu) + H(+). The enzyme catalyses N-terminal L-arginyl-[protein] + L-leucyl-tRNA(Leu) = N-terminal L-leucyl-L-arginyl-[protein] + tRNA(Leu) + H(+). It carries out the reaction L-phenylalanyl-tRNA(Phe) + an N-terminal L-alpha-aminoacyl-[protein] = an N-terminal L-phenylalanyl-L-alpha-aminoacyl-[protein] + tRNA(Phe). In terms of biological role, functions in the N-end rule pathway of protein degradation where it conjugates Leu, Phe and, less efficiently, Met from aminoacyl-tRNAs to the N-termini of proteins containing an N-terminal arginine or lysine. This Stutzerimonas stutzeri (strain A1501) (Pseudomonas stutzeri) protein is Leucyl/phenylalanyl-tRNA--protein transferase.